Consider the following 509-residue polypeptide: MSNRQTSTDVILIGAGIMSATLGTLLKELAPEWEIKVFEKLGKPGEESSNEWNNAGTGHAALCELNYTPEKPDGSIDISKAIRINEQFQVSKQFWAYLVKNNLLQNPQEFIRPLPHISLVQGENNVRFLKKRFEALSNNPLFQGMEFSDDPEKLKEWMPLIMEGRTSNEPIAATKIDSGTDVNFGALTRMLFDHLKRKGVEINYKHSVKDIKRTSDGLWELKVKDLNSGSVEIHKAKFVFIGAGGGSLHLLQKSGIPEGKHIGGFPVSGLFMVCNNPKVVEKHHAKVYGKAKIGAPPMSVPHLDTRYIDNKKMLLFGPFAGFSPKFLKNGSNMDLFASVKLHNLGTLLASAFKNFSLEKYLIQQLMLTKEKRMEELREFVPTAKSEDWDIVIAGQRVQIIKDTEAGGKGTIQFGTEVVSAADGSIAALLGASPGASTAVHVMLEVLKKCFPQHMKEWEPKIKEMIPSYGVSLAKNPDLFQKLHDSTAETLGLNEKEPVSGASEKELVYS.

The interval 490–509 (LGLNEKEPVSGASEKELVYS) is disordered. Positions 493 to 509 (NEKEPVSGASEKELVYS) are enriched in basic and acidic residues.

Belongs to the MQO family. The cofactor is FAD.

The catalysed reaction is (S)-malate + a quinone = a quinol + oxaloacetate. It functions in the pathway carbohydrate metabolism; tricarboxylic acid cycle; oxaloacetate from (S)-malate (quinone route): step 1/1. The protein is Probable malate:quinone oxidoreductase of Geobacillus sp. (strain WCH70).